Consider the following 721-residue polypeptide: DNA ligase (721 aa).

NAD(+) is bound by residues 42 to 46, 91 to 92, and Glu125; these read DAEYD and SL. Catalysis depends on Lys127, which acts as the N6-AMP-lysine intermediate. Arg148, Glu184, Lys300, and Lys324 together coordinate NAD(+). Zn(2+) contacts are provided by Cys430, Cys433, Cys448, and Cys454. Residues 642–721 form the BRCT domain; sequence STGSPVEGKT…DAWFTLVGEE (80 aa).

Belongs to the NAD-dependent DNA ligase family. LigA subfamily. The cofactor is Mg(2+). Mn(2+) serves as cofactor.

The enzyme catalyses NAD(+) + (deoxyribonucleotide)n-3'-hydroxyl + 5'-phospho-(deoxyribonucleotide)m = (deoxyribonucleotide)n+m + AMP + beta-nicotinamide D-nucleotide.. Its function is as follows. DNA ligase that catalyzes the formation of phosphodiester linkages between 5'-phosphoryl and 3'-hydroxyl groups in double-stranded DNA using NAD as a coenzyme and as the energy source for the reaction. It is essential for DNA replication and repair of damaged DNA. The protein is DNA ligase of Brucella anthropi (strain ATCC 49188 / DSM 6882 / CCUG 24695 / JCM 21032 / LMG 3331 / NBRC 15819 / NCTC 12168 / Alc 37) (Ochrobactrum anthropi).